A 205-amino-acid chain; its full sequence is Ribosomal RNA large subunit methyltransferase E (205 aa).

S-adenosyl-L-methionine contacts are provided by G60, W62, D80, D96, and D121. K161 (proton acceptor) is an active-site residue.

This sequence belongs to the class I-like SAM-binding methyltransferase superfamily. RNA methyltransferase RlmE family.

The protein resides in the cytoplasm. It carries out the reaction uridine(2552) in 23S rRNA + S-adenosyl-L-methionine = 2'-O-methyluridine(2552) in 23S rRNA + S-adenosyl-L-homocysteine + H(+). Functionally, specifically methylates the uridine in position 2552 of 23S rRNA at the 2'-O position of the ribose in the fully assembled 50S ribosomal subunit. The polypeptide is Ribosomal RNA large subunit methyltransferase E (Dechloromonas aromatica (strain RCB)).